Reading from the N-terminus, the 376-residue chain is Queuine tRNA-ribosyltransferase (376 aa).

The active-site Proton acceptor is aspartate 93. Substrate-binding positions include 93-97, aspartate 147, glutamine 190, and glycine 217; that span reads DSGGF. Positions 248–254 are RNA binding; sequence GVGTPDD. The active-site Nucleophile is aspartate 267. Residues 272-276 form an RNA binding; important for wobble base 34 recognition region; that stretch reads TRSGR.

This sequence belongs to the queuine tRNA-ribosyltransferase family. Homodimer. Within each dimer, one monomer is responsible for RNA recognition and catalysis, while the other monomer binds to the replacement base PreQ1.

It catalyses the reaction 7-aminomethyl-7-carbaguanine + guanosine(34) in tRNA = 7-aminomethyl-7-carbaguanosine(34) in tRNA + guanine. It participates in tRNA modification; tRNA-queuosine biosynthesis. Its function is as follows. Catalyzes the base-exchange of a guanine (G) residue with the queuine precursor 7-aminomethyl-7-deazaguanine (PreQ1) at position 34 (anticodon wobble position) in tRNAs with GU(N) anticodons (tRNA-Asp, -Asn, -His and -Tyr). Catalysis occurs through a double-displacement mechanism. The nucleophile active site attacks the C1' of nucleotide 34 to detach the guanine base from the RNA, forming a covalent enzyme-RNA intermediate. The proton acceptor active site deprotonates the incoming PreQ1, allowing a nucleophilic attack on the C1' of the ribose to form the product. After dissociation, two additional enzymatic reactions on the tRNA convert PreQ1 to queuine (Q), resulting in the hypermodified nucleoside queuosine (7-(((4,5-cis-dihydroxy-2-cyclopenten-1-yl)amino)methyl)-7-deazaguanosine). In Agrobacterium fabrum (strain C58 / ATCC 33970) (Agrobacterium tumefaciens (strain C58)), this protein is Queuine tRNA-ribosyltransferase.